The following is an 82-amino-acid chain: Histidine-rich protein (82 aa).

The chain is Histidine-rich protein from Plasmodium falciparum (isolate fcm17 / Senegal).